The chain runs to 46 residues: Esculentin-1GRa (46 aa).

As to expression, expressed by the skin glands.

It is found in the secreted. Antimicrobial peptide active against the Gram-positive bacterium S.aureus (MIC=12.5 uM) and against the Gram-negative bacterium E.coli (MIC=6 uM). Has no antifungal activity against C.albicans. Shows hemolytic activity against human erythrocytes only at high concentrations (LC(50)=210 uM). The chain is Esculentin-1GRa from Odorrana grahami (Yunnanfu frog).